The sequence spans 392 residues: MAFLKLTEQNVQGKTVLIRADMNVPFKDGKISDDTRIRASLASVKYCLDNGASVIVMTHLGRPTEGEFHPEDDVAPVAAHLGGLLGKDVKVLNDWRENKPALNAGDVVMLQNVRINKGEKKNDLELGKAYASLCDVFVNDAFGTAHRAQASTEAVAQAAPVACAGVLMAGELDALGKALKQPARPMVAIVAGSKVSTKLTILESLADKVDQLIVGGGIANTFLLAEGKAIGKSLAEHDLVEESKKIMAKMAAKGGSVPLPTDVVVAKAFAADAEAVVKDIADVAEDEMILDIGPKSAAALADLLKAADTVVWNGPVGVFEFDQFAGGTKALTEAIAQSKAFSIAGGGDTLAAIAKFGVTDQIGYISTGGGAFLEFLEGKELPAVAALEKRGE.

Residues 21 to 23, arginine 36, 59 to 62, arginine 114, and arginine 147 contribute to the substrate site; these read DMN and HLGR. ATP contacts are provided by residues lysine 198, glutamate 320, and 346–349; that span reads GGDT.

It belongs to the phosphoglycerate kinase family. As to quaternary structure, monomer.

It is found in the cytoplasm. It catalyses the reaction (2R)-3-phosphoglycerate + ATP = (2R)-3-phospho-glyceroyl phosphate + ADP. The protein operates within carbohydrate degradation; glycolysis; pyruvate from D-glyceraldehyde 3-phosphate: step 2/5. The polypeptide is Phosphoglycerate kinase (Neisseria meningitidis serogroup C (strain 053442)).